The primary structure comprises 144 residues: UPF0735 ACT domain-containing protein NT01CX_1681 (144 aa).

In terms of domain architecture, ACT spans 68-143 (TIGFLLSHKA…NVVKVSLIAM (76 aa)).

It belongs to the UPF0735 family.

The protein is UPF0735 ACT domain-containing protein NT01CX_1681 of Clostridium novyi (strain NT).